We begin with the raw amino-acid sequence, 313 residues long: Meiotically up-regulated gene 100 protein, mitochondrial (313 aa).

The next 2 helical transmembrane spans lie at 147-167 (VFDY…YTAG) and 178-198 (SGFI…TLTF).

It is found in the mitochondrion inner membrane. In terms of biological role, has a role in meiosis. In Schizosaccharomyces pombe (strain 972 / ATCC 24843) (Fission yeast), this protein is Meiotically up-regulated gene 100 protein, mitochondrial (mug100).